The following is a 105-amino-acid chain: Molt-inhibiting hormone (105 aa).

The first 28 residues, 1–28, serve as a signal peptide directing secretion; it reads MYRLAMRTWLAIVIVVVGTSLLFDTASA. Cystine bridges form between C35/C72, C52/C68, and C55/C81.

The protein belongs to the arthropod CHH/MIH/GIH/VIH hormone family. Produced by the medulla terminalis X-organ in the eyestalks and transported to the sinus gland where it is stored and released.

Its subcellular location is the secreted. In terms of biological role, inhibits Y-organs where molting hormone (ecdysteroid) is secreted. A molting cycle is initiated when MIH secretion diminishes or stops. Has little or no hyperglycemic activity. The protein is Molt-inhibiting hormone of Penaeus japonicus (Kuruma prawn).